A 276-amino-acid chain; its full sequence is Omega-amidase NIT2 (276 aa).

A CN hydrolase domain is found at 4 to 248; that stretch reads FRLALIQLQV…ETILYSDIDL (245 aa). Position 26 is a phosphoserine (Ser26). The active-site Proton acceptor is the Glu43. Residue Lys68 is modified to N6-acetyllysine; alternate. Residue Lys68 is modified to N6-succinyllysine; alternate. The active-site Proton donor is Lys112. Residues Lys123 and Lys130 each carry the N6-succinyllysine modification. Residue Cys153 is the Nucleophile of the active site.

This sequence belongs to the carbon-nitrogen hydrolase superfamily. NIT1/NIT2 family. As to quaternary structure, homodimer.

Its subcellular location is the cytoplasm. The catalysed reaction is a monoamide of a dicarboxylate + H2O = a dicarboxylate + NH4(+). It carries out the reaction 2-oxoglutaramate + H2O = 2-oxoglutarate + NH4(+). The enzyme catalyses 2-oxosuccinamate + H2O = oxaloacetate + NH4(+). Functionally, has omega-amidase activity. The role of omega-amidase is to remove potentially toxic intermediates by converting 2-oxoglutaramate and 2-oxosuccinamate to biologically useful 2-oxoglutarate and oxaloacetate, respectively. Can also hydrolyze gamma-monomethyl-alpha-ketoglutarate in vitro. This is Omega-amidase NIT2 from Mus musculus (Mouse).